The following is a 123-amino-acid chain: MPTINQLVRKPRKSRSALNKAPALQHNPQKRAVCVKVYTTTPKKPNSALRKVARVKIAGYGSEVIAYIPGEGHNLQEHSVVLIRGGRVKDLPGVRYHIIRGALDSRGVQNRKKARSKYGVKKS.

The segment at methionine 1–glutamine 25 is disordered. The residue at position 90 (aspartate 90) is a 3-methylthioaspartic acid.

Belongs to the universal ribosomal protein uS12 family. In terms of assembly, part of the 30S ribosomal subunit. Contacts proteins S8 and S17. May interact with IF1 in the 30S initiation complex.

With S4 and S5 plays an important role in translational accuracy. In terms of biological role, interacts with and stabilizes bases of the 16S rRNA that are involved in tRNA selection in the A site and with the mRNA backbone. Located at the interface of the 30S and 50S subunits, it traverses the body of the 30S subunit contacting proteins on the other side and probably holding the rRNA structure together. The combined cluster of proteins S8, S12 and S17 appears to hold together the shoulder and platform of the 30S subunit. This is Small ribosomal subunit protein uS12 from Ehrlichia canis (strain Jake).